Here is a 493-residue protein sequence, read N- to C-terminus: Ferruginol synthase 1 (493 aa).

A helical transmembrane segment spans residues 2-22 (DSFPLLAALFFILAATWFISF). Residue C437 coordinates heme.

The protein belongs to the cytochrome P450 family. Heme serves as cofactor. As to expression, expressed in leaf glandular trichomes.

The protein resides in the membrane. It catalyses the reaction abieta-8,11,13-triene + reduced [NADPH--hemoprotein reductase] + O2 = ferruginol + oxidized [NADPH--hemoprotein reductase] + H2O + H(+). It carries out the reaction ferruginol + reduced [NADPH--hemoprotein reductase] + O2 = 11-hydroxyferruginol + oxidized [NADPH--hemoprotein reductase] + H2O + H(+). The enzyme catalyses miltiradiene + 2 reduced [NADPH--hemoprotein reductase] + 2 O2 = 11-oxomiltiradiene + 2 oxidized [NADPH--hemoprotein reductase] + 3 H2O + 2 H(+). Its pathway is secondary metabolite biosynthesis; terpenoid biosynthesis. Functionally, monooxygenase involved in the biosynthesis of labdane-related diterpenes natural products. Catalyzes the oxidation of abietatriene to produce ferruginol. Catalyzes the oxidation of ferruginol at C-12 to produce 11-hydroxyferruginol. Ferruginol and 11-hydroxyferruginol are intermediates in the biosynthesis of carnosate, a potent antioxidant. May also convert miltiradiene into 11-oxomiltiradiene. The sequence is that of Ferruginol synthase 1 from Rosmarinus officinalis (Rosemary).